The primary structure comprises 480 residues: Chromosomal replication initiator protein DnaA (480 aa).

The segment at 1 to 71 (MRHDALFERV…TTLVQQEDSE (71 aa)) is domain I, interacts with DnaA modulators. Positions 71 to 137 (EILKVEILVR…RPVQAPLFGS (67 aa)) are domain II. The domain III, AAA+ region stretch occupies residues 138 to 360 (PLDQRYGFDS…GAFNQLLFRR (223 aa)). Residues Gly184, Gly186, Lys187, and Thr188 each contribute to the ATP site. The domain IV, binds dsDNA stretch occupies residues 361–480 (SFEPQLSIER…IELLKRLINE (120 aa)).

This sequence belongs to the DnaA family. Oligomerizes as a right-handed, spiral filament on DNA at oriC.

The protein localises to the cytoplasm. Functionally, plays an essential role in the initiation and regulation of chromosomal replication. ATP-DnaA binds to the origin of replication (oriC) to initiate formation of the DNA replication initiation complex once per cell cycle. Binds the DnaA box (a 9 base pair repeat at the origin) and separates the double-stranded (ds)DNA. Forms a right-handed helical filament on oriC DNA; dsDNA binds to the exterior of the filament while single-stranded (ss)DNA is stabiized in the filament's interior. The ATP-DnaA-oriC complex binds and stabilizes one strand of the AT-rich DNA unwinding element (DUE), permitting loading of DNA polymerase. After initiation quickly degrades to an ADP-DnaA complex that is not apt for DNA replication. Binds acidic phospholipids. The polypeptide is Chromosomal replication initiator protein DnaA (Rhizobium meliloti (strain 1021) (Ensifer meliloti)).